Reading from the N-terminus, the 1416-residue chain is 1-phosphatidylinositol 4,5-bisphosphate phosphodiesterase eta-2 (1416 aa).

Positions 1–155 (MSGPWPSPDS…WVTGLRYLMA (155 aa)) are necessary for plasma membrane localization. In terms of domain architecture, PH spans 47-155 (GAMQEGMQMV…WVTGLRYLMA (109 aa)). EF-hand domains lie at 169-204 (TRDQ…LNVN) and 205-241 (LPRQ…MSTR). Ca(2+)-binding residues include D182, N184, D186, S188, and E193. In terms of domain architecture, PI-PLC X-box spans 326-471 (QDMTQPLSHY…LKGKILVKGK (146 aa)). H341 is a catalytic residue. Residues N342, E371, and D373 each coordinate Ca(2+). H385 is an active-site residue. E420 contacts Ca(2+). Positions 469 and 471 each coordinate substrate. S487 and S491 each carry phosphoserine. Residues 535–620 (DPNNFSVSTL…RGATRQKKTM (86 aa)) form a disordered region. The segment covering 537 to 546 (NNFSVSTLSP) has biased composition (polar residues). Over residues 581 to 592 (SRRKKKGSKLKK) the composition is skewed to basic residues. A phosphoserine mark is found at S595 and S605. The PI-PLC Y-box domain occupies 626 to 740 (LSDLVKYTKS…GYVLKPGCMC (115 aa)). Residues S653 and R680 each coordinate substrate. Residues 740 to 869 (CQGVFNPNSE…PGYRHVYLEG (130 aa)) enclose the C2 domain. 6 residues coordinate Ca(2+): I784, D786, D810, D839, H840, and D841. 3 disordered regions span residues 905 to 1109 (GSLD…GGWR), 1121 to 1222 (YSDA…LQPR), and 1315 to 1405 (ITSP…GPAS). The span at 1011 to 1021 (APGPGPPPPAA) shows a compositional bias: pro residues. A compositionally biased stretch (polar residues) spans 1073-1083 (GSQTDGRSQPR). The span at 1143-1166 (VSSSSSMSSSDTVIDLSLPSLGLG) shows a compositional bias: low complexity. Polar residues predominate over residues 1199-1208 (KSKSNPNLRA). Residues 1324–1333 (AGEGVAGGPG) are compositionally biased toward gly residues.

Ca(2+) serves as cofactor. In terms of tissue distribution, expressed in retina and kidney.

Its subcellular location is the cytoplasm. It localises to the cell membrane. It catalyses the reaction a 1,2-diacyl-sn-glycero-3-phospho-(1D-myo-inositol-4,5-bisphosphate) + H2O = 1D-myo-inositol 1,4,5-trisphosphate + a 1,2-diacyl-sn-glycerol + H(+). Its activity is regulated as follows. Activity is stimulated by GNB1:GNG2. In terms of biological role, the production of the second messenger molecules diacylglycerol (DAG) and inositol 1,4,5-trisphosphate (IP3) is mediated by activated phosphatidylinositol-specific phospholipase C enzymes. This phospholipase activity is very sensitive to calcium. May be important for formation and maintenance of the neuronal network in the postnatal brain. The protein is 1-phosphatidylinositol 4,5-bisphosphate phosphodiesterase eta-2 of Homo sapiens (Human).